The primary structure comprises 630 residues: Scarecrow-like protein 34 (630 aa).

The GRAS domain maps to 240 to 628; it reads KKKKSQVVDF…RTLYASSCWV (389 aa). A leucine repeat I (LRI) region spans residues 247 to 312; sequence VDFRTLLTHC…GSTGPMIQTY (66 aa). Residues 331–396 are VHIID; the sequence is YRVYLSSSPF…DVPRKLRITG (66 aa). The VHIID signature appears at 362–366; that stretch reads LHIVD. Residues 412-444 form a leucine repeat II (LRII) region; sequence ETGRRLAEYCKRFNVPFEYKAIASQNWETIRIE. The segment at 454–549 is PFYRE; the sequence is LAVNAGLRLK…REFYGREAMN (96 aa). Residues 552-628 are SAW; it reads ACEEADRVER…RTLYASSCWV (77 aa).

Belongs to the GRAS family.

The protein resides in the nucleus. Functionally, probable transcription factor involved in plant development. This is Scarecrow-like protein 34 (SCL34) from Arabidopsis thaliana (Mouse-ear cress).